The chain runs to 190 residues: Peptidyl-tRNA hydrolase (190 aa).

Residue F14 participates in tRNA binding. Catalysis depends on H19, which acts as the Proton acceptor. Residues M64, N66, and N112 each contribute to the tRNA site.

This sequence belongs to the PTH family. As to quaternary structure, monomer.

Its subcellular location is the cytoplasm. The catalysed reaction is an N-acyl-L-alpha-aminoacyl-tRNA + H2O = an N-acyl-L-amino acid + a tRNA + H(+). Functionally, hydrolyzes ribosome-free peptidyl-tRNAs (with 1 or more amino acids incorporated), which drop off the ribosome during protein synthesis, or as a result of ribosome stalling. Its function is as follows. Catalyzes the release of premature peptidyl moieties from peptidyl-tRNA molecules trapped in stalled 50S ribosomal subunits, and thus maintains levels of free tRNAs and 50S ribosomes. This is Peptidyl-tRNA hydrolase from Staphylococcus aureus (strain bovine RF122 / ET3-1).